Consider the following 151-residue polypeptide: Large ribosomal subunit protein bL28c (151 aa).

The transit peptide at 1–74 directs the protein to the chloroplast; the sequence is MATMVAGISL…PFKPSLQPVA (74 aa).

Belongs to the bacterial ribosomal protein bL28 family. Part of the 50S ribosomal subunit.

It is found in the plastid. Its subcellular location is the chloroplast. The protein is Large ribosomal subunit protein bL28c (RPL28) of Nicotiana tabacum (Common tobacco).